The sequence spans 117 residues: Conotoxin vil14.2 (117 aa).

The first 22 residues, 1-22 (MGFRVLVLVVMATTFALPFTFF), serve as a signal peptide directing secretion. Positions 23-90 (EEPGRSPFRP…FAELSVGQRR (68 aa)) are excised as a propeptide. Residues 53–77 (RADGQPPDMRQPEMRRPEMRRPEVR) are disordered. Positions 62 to 77 (RQPEMRRPEMRRPEVR) are enriched in basic and acidic residues. 2 disulfides stabilise this stretch: C96-C116 and C100-C112.

This sequence belongs to the conotoxin R superfamily. Expressed by the venom duct.

Its subcellular location is the secreted. The chain is Conotoxin vil14.2 from Conus villepinii (Villepin's cone).